The following is a 158-amino-acid chain: Large ribosomal subunit protein eL24 (158 aa).

Basic and acidic residues predominate over residues 98-146 (LDASHKKAEAEKAVRELKQKKANDIEKKRADRKLQGKDVKAAKKAETKK). The tract at residues 98–158 (LDASHKKAEA…QPVGAKGGKK (61 aa)) is disordered.

Belongs to the eukaryotic ribosomal protein eL24 family.

The polypeptide is Large ribosomal subunit protein eL24 (RPL24) (Tetrahymena thermophila (strain SB210)).